We begin with the raw amino-acid sequence, 473 residues long: Serine palmitoyltransferase 1 (473 aa).

Residues 1 to 15 (MAMAAEQWVLVEMVQ) lie on the Lumenal side of the membrane. The segment at 1–66 (MAMAAEQWVL…KEELIEEWQP (66 aa)) is interaction with SPTLC2. Residues 16-36 (ALYEAPAYHLILEGILILWII) traverse the membrane as a helical segment. Residues 37–473 (RLVFSKTYKL…IREAAQAVLL (437 aa)) are Cytoplasmic-facing. Phosphotyrosine; by ABL is present on tyrosine 164.

This sequence belongs to the class-II pyridoxal-phosphate-dependent aminotransferase family. As to quaternary structure, component of the serine palmitoyltransferase (SPT) complex, which is also composed of SPTLC2 or SPTLC3 and SPTSSA or SPTSSB. The heterodimer with SPTLC2 or SPTLC3 forms the catalytic core of the enzyme, while SPTSSA or SPTSSB subunits determine substrate specificity. SPT also interacts with ORMDL proteins, especially ORMDL3, which negatively regulate SPT activity in the presence of ceramides. Forms dimers of heterodimers with SPTLC2. Interacts with RTN4. Pyridoxal 5'-phosphate serves as cofactor. In terms of processing, phosphorylation at Tyr-164 inhibits activity and promotes cell survival.

The protein localises to the endoplasmic reticulum membrane. It carries out the reaction L-serine + hexadecanoyl-CoA + H(+) = 3-oxosphinganine + CO2 + CoA. It catalyses the reaction octadecanoyl-CoA + L-serine + H(+) = 3-oxoeicosasphinganine + CO2 + CoA. The catalysed reaction is tetradecanoyl-CoA + L-serine + H(+) = 3-oxohexadecasphinganine + CO2 + CoA. The enzyme catalyses dodecanoyl-CoA + L-serine + H(+) = 3-oxotetradecasphinganine + CO2 + CoA. It functions in the pathway lipid metabolism; sphingolipid metabolism. Its activity is regulated as follows. SPT complex catalytic activity is negatively regulated by ORMDL proteins, including ORMDL3, in the presence of ceramides. This mechanism allows to maintain ceramide levels at sufficient concentrations for the production of complex sphingolipids, but which prevents the accumulation of ceramides to levels that trigger apoptosis. Component of the serine palmitoyltransferase multisubunit enzyme (SPT) that catalyzes the initial and rate-limiting step in sphingolipid biosynthesis by condensing L-serine and activated acyl-CoA (most commonly palmitoyl-CoA) to form long-chain bases. The SPT complex is also composed of SPTLC2 or SPTLC3 and SPTSSA or SPTSSB. Within this complex, the heterodimer with SPTLC2 or SPTLC3 forms the catalytic core. The composition of the serine palmitoyltransferase (SPT) complex determines the substrate preference. The SPTLC1-SPTLC2-SPTSSA complex shows a strong preference for C16-CoA substrate, while the SPTLC1-SPTLC3-SPTSSA isozyme uses both C14-CoA and C16-CoA as substrates, with a slight preference for C14-CoA. The SPTLC1-SPTLC2-SPTSSB complex shows a strong preference for C18-CoA substrate, while the SPTLC1-SPTLC3-SPTSSB isozyme displays an ability to use a broader range of acyl-CoAs, without apparent preference. Required for adipocyte cell viability and metabolic homeostasis. The polypeptide is Serine palmitoyltransferase 1 (SPTLC1) (Cricetulus griseus (Chinese hamster)).